The primary structure comprises 142 residues: RNA polymerase-binding transcription factor DksA (142 aa).

Disordered regions lie at residues 1–20 (MQTA…EDEP), 51–70 (HLQK…SSET), and 119–142 (RPTA…HRDD). The dksA C4-type zinc-finger motif lies at 104–128 (CEETGEPIGLARLEARPTATMSVEA). Residues 128–142 (AQERHERRERVHRDD) show a composition bias toward basic and acidic residues.

This sequence belongs to the DksA family. In terms of assembly, interacts directly with the RNA polymerase.

It is found in the cytoplasm. Functionally, transcription factor that acts by binding directly to the RNA polymerase (RNAP). Required for negative regulation of rRNA expression and positive regulation of several amino acid biosynthesis promoters. The polypeptide is RNA polymerase-binding transcription factor DksA (Caulobacter vibrioides (strain ATCC 19089 / CIP 103742 / CB 15) (Caulobacter crescentus)).